Reading from the N-terminus, the 163-residue chain is Endoribonuclease YbeY (163 aa).

Zn(2+) is bound by residues histidine 123, histidine 127, and histidine 133.

It belongs to the endoribonuclease YbeY family. Zn(2+) is required as a cofactor.

It localises to the cytoplasm. Its function is as follows. Single strand-specific metallo-endoribonuclease involved in late-stage 70S ribosome quality control and in maturation of the 3' terminus of the 16S rRNA. This Helicobacter hepaticus (strain ATCC 51449 / 3B1) protein is Endoribonuclease YbeY.